The following is a 514-amino-acid chain: Alstonine synthase (514 aa).

Residues 4–24 form a helical membrane-spanning segment; it reads PQFSCLLPAFFLLVVFLFLLI. Asn428 carries an N-linked (GlcNAc...) asparagine glycan. A heme-binding site is contributed by Cys450.

The protein belongs to the cytochrome P450 family. The cofactor is heme.

The protein resides in the membrane. It catalyses the reaction tetrahydroalstonine + A + reduced [NADPH--hemoprotein reductase] + O2 = alstonine + AH2 + oxidized [NADPH--hemoprotein reductase] + 2 H2O + H(+). Its pathway is alkaloid biosynthesis. In terms of biological role, a cytochrome P450 monooxygenase involved in the biosynthesis of pentacyclic alkaloids natural products such as alstonine, putative antipsychotic compounds. Catalyzes the conversion of tetrahydroalstonine to alstonine. No oxidative activity towards ajmalicine. The chain is Alstonine synthase from Alstonia scholaris (Dogbane).